A 274-amino-acid polypeptide reads, in one-letter code: MGIRKLKPTTPGQRHKVIGAFDKITASTPEKSLVVGKKSTGGRNNTGKMTMRYIGGGHKQKYRIIDFKRNKDGIPATVKSIEYDPNRSSRIALLYYADGAKSYIIAPNGLEVGQTVVSGSDAAPEVGNTLPMANIPVGTIIHNIELRPGQGAKMVRSAGAFAQLTSKEGAYAIIKMPSGETRKILAACKATIGAVGNSDHALEKSGKAGRSRWLGRRPRNRGVVMNPVDHPMGGGEGRSSGGHPRSRNGLYAKGLKTRAPKKHSSKYIIERRKK.

A disordered region spans residues histidine 200 to lysine 274. Composition is skewed to basic residues over residues lysine 207–asparagine 220 and leucine 255–lysine 274.

The protein belongs to the universal ribosomal protein uL2 family. In terms of assembly, part of the 50S ribosomal subunit. Forms a bridge to the 30S subunit in the 70S ribosome.

In terms of biological role, one of the primary rRNA binding proteins. Required for association of the 30S and 50S subunits to form the 70S ribosome, for tRNA binding and peptide bond formation. It has been suggested to have peptidyltransferase activity; this is somewhat controversial. Makes several contacts with the 16S rRNA in the 70S ribosome. This chain is Large ribosomal subunit protein uL2, found in Parabacteroides distasonis (strain ATCC 8503 / DSM 20701 / CIP 104284 / JCM 5825 / NCTC 11152).